The primary structure comprises 906 residues: Aconitate hydratase A (906 aa).

The propeptide occupies M1–S2. C441, C507, and C510 together coordinate [4Fe-4S] cluster.

It belongs to the aconitase/IPM isomerase family. As to quaternary structure, monomer. [4Fe-4S] cluster is required as a cofactor.

It carries out the reaction citrate = D-threo-isocitrate. The enzyme catalyses (2S,3R)-3-hydroxybutane-1,2,3-tricarboxylate = 2-methyl-cis-aconitate + H2O. It functions in the pathway carbohydrate metabolism; tricarboxylic acid cycle; isocitrate from oxaloacetate: step 2/2. It participates in organic acid metabolism; propanoate degradation. Involved in the catabolism of short chain fatty acids (SCFA) via the tricarboxylic acid (TCA)(acetyl degradation route) and probably the 2-methylcitrate cycle I (propionate degradation route). Catalyzes the reversible isomerization of citrate to isocitrate via cis-aconitate. Could catalyze the hydration of 2-methyl-cis-aconitate to yield (2R,3S)-2-methylisocitrate. The apo form of AcnA functions as a RNA-binding regulatory protein. The sequence is that of Aconitate hydratase A (acn) from Deinococcus radiodurans (strain ATCC 13939 / DSM 20539 / JCM 16871 / CCUG 27074 / LMG 4051 / NBRC 15346 / NCIMB 9279 / VKM B-1422 / R1).